Here is a 58-residue protein sequence, read N- to C-terminus: ATP synthase F(0) complex subunit k, mitochondrial (58 aa).

An N6-acetyllysine; partial mark is found at lysine 16 and lysine 17. Residues 23-45 (TLTGRMNCVLATYGSIALIVLYF) form a helical membrane-spanning segment.

As to quaternary structure, component of the ATP synthase complex composed at least of ATP5F1A/subunit alpha, ATP5F1B/subunit beta, ATP5MC1/subunit c (homooctomer), MT-ATP6/subunit a, MT-ATP8/subunit 8, ATP5ME/subunit e, ATP5MF/subunit f, ATP5MG/subunit g, ATP5MK/subunit k, ATP5MJ/subunit j, ATP5F1C/subunit gamma, ATP5F1D/subunit delta, ATP5F1E/subunit epsilon, ATP5PF/subunit F6, ATP5PB/subunit b, ATP5PD/subunit d, ATP5PO/subunit OSCP. ATP synthase complex consists of a soluble F(1) head domain (subunits alpha(3) and beta(3)) - the catalytic core - and a membrane F(0) domain - the membrane proton channel (subunits c, a, 8, e, f, g, k and j). These two domains are linked by a central stalk (subunits gamma, delta, and epsilon) rotating inside the F1 region and a stationary peripheral stalk (subunits F6, b, d, and OSCP). The ATP synthase complex/complex V exists as a monomeric and a dimeric supercomplex that helps shape mitochondrial cristae to optimize proton flow.

Its subcellular location is the mitochondrion membrane. Subunit k, of the mitochondrial membrane ATP synthase complex (F(1)F(0) ATP synthase or Complex V) that produces ATP from ADP in the presence of a proton gradient across the membrane which is generated by electron transport complexes of the respiratory chain. ATP synthase complex consist of a soluble F(1) head domain - the catalytic core - and a membrane F(1) domain - the membrane proton channel. These two domains are linked by a central stalk rotating inside the F(1) region and a stationary peripheral stalk. During catalysis, ATP synthesis in the catalytic domain of F(1) is coupled via a rotary mechanism of the central stalk subunits to proton translocation. In vivo, can only synthesize ATP although its ATP hydrolase activity can be activated artificially in vitro. Part of the complex F(0) domain. Required for dimerization of the ATP synthase complex and as such regulates ATP synthesis in the mitochondria. The polypeptide is ATP synthase F(0) complex subunit k, mitochondrial (Bos taurus (Bovine)).